Consider the following 94-residue polypeptide: Protein RnfH (94 aa).

The protein belongs to the UPF0125 (RnfH) family.

This chain is Protein RnfH, found in Sodalis glossinidius (strain morsitans).